A 280-amino-acid polypeptide reads, in one-letter code: Small ribosomal subunit protein uS3 (280 aa).

One can recognise a KH type-2 domain in the interval 38–106; the sequence is IRKLLATGLE…QVQLNILEVK (69 aa). Residues 216 to 280 are disordered; it reads AAAPAADRPR…SAGQPETTES (65 aa). Residues 237–270 show a composition bias toward low complexity; sequence SGASGTTATSTDAGRAASEGTVEAPATEAAATAP.

This sequence belongs to the universal ribosomal protein uS3 family. Part of the 30S ribosomal subunit. Forms a tight complex with proteins S10 and S14.

In terms of biological role, binds the lower part of the 30S subunit head. Binds mRNA in the 70S ribosome, positioning it for translation. The chain is Small ribosomal subunit protein uS3 from Mycolicibacterium vanbaalenii (strain DSM 7251 / JCM 13017 / BCRC 16820 / KCTC 9966 / NRRL B-24157 / PYR-1) (Mycobacterium vanbaalenii).